Reading from the N-terminus, the 170-residue chain is Cytochrome bc1 complex Rieske iron-sulfur subunit (170 aa).

Positions 63-153 (KAALMIIRLE…IGVNDEGYLE (91 aa)) constitute a Rieske domain. Residues cysteine 96, histidine 98, cysteine 115, and histidine 118 each coordinate [2Fe-2S] cluster. An intrachain disulfide couples cysteine 101 to cysteine 117.

In terms of assembly, the cytochrome bc1 complex is composed of a cytochrome b (QcrB), the Rieske iron-sulfur protein (QcrA) and a diheme cytochrome c (QcrC) subunit. [2Fe-2S] cluster is required as a cofactor.

It is found in the cell membrane. Its function is as follows. Iron-sulfur subunit of the cytochrome bc1 complex, an essential component of the respiratory electron transport chain required for ATP synthesis. The bc1 complex catalyzes the oxidation of menaquinol and the reduction of cytochrome c in the respiratory chain. The bc1 complex operates through a Q-cycle mechanism that couples electron transfer to generation of the proton gradient that drives ATP synthesis. This is Cytochrome bc1 complex Rieske iron-sulfur subunit (qcrA) from Streptomyces lividans.